A 210-amino-acid chain; its full sequence is Resolvase (210 aa).

Positions 6 to 150 constitute a Resolvase/invertase-type recombinase catalytic domain; it reads VARVYLRVSS…EDRRERQRQG (145 aa). Residue Ser14 is the O-(5'-phospho-DNA)-serine intermediate of the active site. Positions 191–210 form a DNA-binding region, H-T-H motif; it reads GVSVSQVKRVWAQNQTKDKV.

Belongs to the site-specific recombinase resolvase family.

In terms of biological role, site-specific recombination protein. The chain is Resolvase (stbA) from Pseudomonas syringae pv. tomato.